We begin with the raw amino-acid sequence, 502 residues long: MTEKKYIVALDQGTTSSRAVVMDHDANIISVSQREFEQIYPKPGWVEHDPMEIWATQSSTLVEVLAKADISSDQIAAIGITNQRETTIVWEKETGKPIYNAIVWQCRRTAEICEHLKRDGMEEYIRNNTGLVIDPYFSGTKVKWILDHVEGSRERARRGELLFGTVDTWLIWKMTQGRVHVTDYTNASRTMLFNIHTLDWDDKMLEVLDIPREMLPEVRRSSEVYGQTNIGGKGGTRIPISGIAGDQQAALFGQLCVKEGMAKNTYGTGCFMLMNTGEKAVKSENGLLTTIACGPTGEVNYALEGAVFMAGASIQWLRDEMKLINDAYDSEYFATKVQNTNGVYVVPAFTGLGAPYWDPYARGAIFGLTRGVNANHIIRATLESIAYQTRDVLEAMQADSGIRLHALRVDGGAVANNFLMQFQSDILGTRVERPEVREVTALGAAYLAGLAVGFWQNLDELQEKAVIEREFRPGIETTERNYRYAGWKKAIKRAMAWEEHDE.

Threonine 14 contributes to the ADP binding site. ATP-binding residues include threonine 14, threonine 15, and serine 16. Threonine 14 contributes to the sn-glycerol 3-phosphate binding site. Residue arginine 18 participates in ADP binding. Residues arginine 84, glutamate 85, tyrosine 136, and aspartate 246 each coordinate sn-glycerol 3-phosphate. Arginine 84, glutamate 85, tyrosine 136, aspartate 246, and glutamine 247 together coordinate glycerol. ADP is bound by residues threonine 268 and glycine 311. ATP contacts are provided by threonine 268, glycine 311, glutamine 315, and glycine 412. Glycine 412 and asparagine 416 together coordinate ADP.

It belongs to the FGGY kinase family. Homotetramer and homodimer (in equilibrium). Heterodimer with EIIA-Glc. Binds 1 zinc ion per glycerol kinase EIIA-Glc dimer. The zinc ion is important for dimerization.

The catalysed reaction is glycerol + ATP = sn-glycerol 3-phosphate + ADP + H(+). Its pathway is polyol metabolism; glycerol degradation via glycerol kinase pathway; sn-glycerol 3-phosphate from glycerol: step 1/1. Its activity is regulated as follows. Activity of this regulatory enzyme is affected by several metabolites. Allosterically and non-competitively inhibited by fructose 1,6-bisphosphate (FBP) and unphosphorylated phosphocarrier protein EIIA-Glc (III-Glc), an integral component of the bacterial phosphotransferase (PTS) system. In terms of biological role, key enzyme in the regulation of glycerol uptake and metabolism. Catalyzes the phosphorylation of glycerol to yield sn-glycerol 3-phosphate. This chain is Glycerol kinase, found in Escherichia coli O81 (strain ED1a).